The chain runs to 612 residues: tRNA(Met) cytidine acetyltransferase TmcA (612 aa).

Residues glutamine 136, 161 to 170 (GRGKSTLLGQ), and arginine 284 contribute to the ATP site. Residues 319–499 (KHASELEEAL…PAAIYALPLT (181 aa)) form the N-acetyltransferase domain. 424–426 (IAV) contributes to the acetyl-CoA binding site.

It belongs to the RNA cytidine acetyltransferase family. TmcA subfamily.

It is found in the cytoplasm. It catalyses the reaction cytidine(34) in elongator tRNA(Met) + acetyl-CoA + ATP + H2O = N(4)-acetylcytidine(34) in elongator tRNA(Met) + ADP + phosphate + CoA + H(+). Catalyzes the formation of N(4)-acetylcytidine (ac(4)C) at the wobble position of tRNA(Met), by using acetyl-CoA as an acetyl donor and ATP (or GTP). In Idiomarina loihiensis (strain ATCC BAA-735 / DSM 15497 / L2-TR), this protein is tRNA(Met) cytidine acetyltransferase TmcA.